The chain runs to 65 residues: Large ribosomal subunit protein bL35 (65 aa).

Basic residues predominate over residues 1–15 (MPKMKTKKSASKRFT). Disordered stretches follow at residues 1–26 (MPKM…KRGQ) and 38–65 (TKNK…MPYA). Residues 45-54 (RGTEGVHETN) show a composition bias toward basic and acidic residues.

The protein belongs to the bacterial ribosomal protein bL35 family.

The polypeptide is Large ribosomal subunit protein bL35 (Ralstonia pickettii (strain 12J)).